Reading from the N-terminus, the 223-residue chain is Deoxyribose-phosphate aldolase (223 aa).

The Proton donor/acceptor role is filled by aspartate 91. The active-site Schiff-base intermediate with acetaldehyde is the lysine 153. Catalysis depends on lysine 182, which acts as the Proton donor/acceptor.

It belongs to the DeoC/FbaB aldolase family. DeoC type 1 subfamily.

The protein resides in the cytoplasm. The enzyme catalyses 2-deoxy-D-ribose 5-phosphate = D-glyceraldehyde 3-phosphate + acetaldehyde. It participates in carbohydrate degradation; 2-deoxy-D-ribose 1-phosphate degradation; D-glyceraldehyde 3-phosphate and acetaldehyde from 2-deoxy-alpha-D-ribose 1-phosphate: step 2/2. Catalyzes a reversible aldol reaction between acetaldehyde and D-glyceraldehyde 3-phosphate to generate 2-deoxy-D-ribose 5-phosphate. This chain is Deoxyribose-phosphate aldolase, found in Streptococcus pyogenes serotype M28 (strain MGAS6180).